We begin with the raw amino-acid sequence, 297 residues long: 4-hydroxy-tetrahydrodipicolinate synthase (297 aa).

Threonine 47 is a pyruvate binding site. Residue tyrosine 136 is the Proton donor/acceptor of the active site. The Schiff-base intermediate with substrate role is filled by lysine 165. Residue isoleucine 206 coordinates pyruvate.

It belongs to the DapA family. In terms of assembly, homotetramer; dimer of dimers.

The protein localises to the cytoplasm. It catalyses the reaction L-aspartate 4-semialdehyde + pyruvate = (2S,4S)-4-hydroxy-2,3,4,5-tetrahydrodipicolinate + H2O + H(+). Its pathway is amino-acid biosynthesis; L-lysine biosynthesis via DAP pathway; (S)-tetrahydrodipicolinate from L-aspartate: step 3/4. Catalyzes the condensation of (S)-aspartate-beta-semialdehyde [(S)-ASA] and pyruvate to 4-hydroxy-tetrahydrodipicolinate (HTPA). The chain is 4-hydroxy-tetrahydrodipicolinate synthase from Campylobacter fetus subsp. fetus (strain 82-40).